The chain runs to 89 residues: MTILASISSIGNVKSITKSKNVSFSSSSPSSSQSLNSIQYSPCGGPTLGNVVGNLVGGVLIGTGVIVGSVLNTVGTITNPILHPSCGCN.

It belongs to the hssA/B family.

The polypeptide is HssA/B-like protein DDB_G0295685 (Dictyostelium discoideum (Social amoeba)).